A 310-amino-acid chain; its full sequence is MPKRAKKNEEGVDGEADNGTAAAKKEKKGKEPEAPILYEDPPEKLTSKDGRAANMKITSWNVDGLRAWVKKNGLDWVRKEDPDILCLQETKCAEKALPADITGMPEYPHKYWAGSEDKEGYSGVAMLCKTEPLNVTYGIGKEEHDKEGRVITAEFPDFFLVTAYVPNASRGLVRLDYRKTWDVDFRAYLCGLDARKPLVLCGDLNVAHQEIDLKNPKGNRKNAGFTPEEREGFTQLLEAGFTDSFRELYPDQAYAYTFWTYMMNARSKNVGWRLDYFVLSSALLPGLCDSKIRNTAMGSDHCPITLFLAV.

Residues 1–51 (MPKRAKKNEEGVDGEADNGTAAAKKEKKGKEPEAPILYEDPPEKLTSKDGR) are disordered. Over residues 41-51 (PPEKLTSKDGR) the composition is skewed to basic and acidic residues. Residues aspartate 63 and glutamate 89 each contribute to the Mg(2+) site. The active site involves tyrosine 164. Mg(2+)-binding residues include aspartate 203, asparagine 205, and aspartate 300. Aspartate 203 functions as the Proton donor/acceptor in the catalytic mechanism.

The protein belongs to the DNA repair enzymes AP/ExoA family. Mg(2+) serves as cofactor. Requires Mn(2+) as cofactor.

It is found in the nucleus. The protein localises to the nucleolus. It localises to the nucleus speckle. Its subcellular location is the endoplasmic reticulum. The protein resides in the cytoplasm. It is found in the mitochondrion. It catalyses the reaction Exonucleolytic cleavage in the 3'- to 5'-direction to yield nucleoside 5'-phosphates.. Its function is as follows. Functions as an apurinic/apyrimidinic (AP) endodeoxyribonuclease in the DNA base excision repair (BER) pathway of DNA lesions induced by oxidative and alkylating agents. Initiates repair of AP sites in DNA by catalyzing hydrolytic incision of the phosphodiester backbone immediately adjacent to the damage, generating a single-strand break with 5'-deoxyribose phosphate and 3'-hydroxyl ends. Has 3'-5' exoribonuclease activity on mismatched deoxyribonucleotides at the 3' termini of nicked or gapped DNA molecules during short-patch BER. May also play a role in the epigenetic regulation of gene expression by participating in DNA demethylation. Required for passage through the mid-blastula transition MBT. May also act as an endoribonuclease involved in the control of single-stranded RNA metabolism. Has no redox activity. Binds DNA and RNA. This chain is DNA repair nuclease APEX1 (apex1), found in Danio rerio (Zebrafish).